The sequence spans 206 residues: Acidic proline-rich protein PRP33 (206 aa).

Positions 1–13 are cleaved as a signal peptide; sequence MLVVLLTAALLVL. The segment at 15–206 is disordered; it reads SAHGSDEEVI…EQPSYLWFSS (192 aa). A compositionally biased stretch (acidic residues) spans 55–71; sequence ENGDGDDSDDGDDDGSG. Tandem repeats lie at residues 80–97, 98–115, 116–133, 134–152, 153–170, and 171–189. Residues 80–189 form a 6 X 18 AA approximate tandem repeats region; sequence PPPHGGNHQR…RPPQPRKPQD (110 aa). Low complexity predominate over residues 103–112; the sequence is GPQTSSQPGN. The span at 113 to 174 shows a compositional bias: pro residues; sequence PQGPPPQGGP…PGNPQGPPPQ (62 aa).

The protein localises to the secreted. May protect teeth by binding to tannins. This is Acidic proline-rich protein PRP33 (Prpg1) from Rattus norvegicus (Rat).